The following is a 459-amino-acid chain: Pup--protein ligase (459 aa).

Glutamate 9 contacts Mg(2+). Position 54 (arginine 54) interacts with ATP. Residue tyrosine 56 participates in Mg(2+) binding. Aspartate 58 acts as the Proton acceptor in catalysis. Glutamate 64 contacts Mg(2+). Positions 67 and 421 each coordinate ATP.

Belongs to the Pup ligase/Pup deamidase family. Pup-conjugating enzyme subfamily.

It catalyses the reaction ATP + [prokaryotic ubiquitin-like protein]-L-glutamate + [protein]-L-lysine = ADP + phosphate + N(6)-([prokaryotic ubiquitin-like protein]-gamma-L-glutamyl)-[protein]-L-lysine.. Its pathway is protein degradation; proteasomal Pup-dependent pathway. It functions in the pathway protein modification; protein pupylation. Catalyzes the covalent attachment of the prokaryotic ubiquitin-like protein modifier Pup to the proteasomal substrate proteins, thereby targeting them for proteasomal degradation. This tagging system is termed pupylation. The ligation reaction involves the side-chain carboxylate of the C-terminal glutamate of Pup and the side-chain amino group of a substrate lysine. This is Pup--protein ligase from Jonesia denitrificans (strain ATCC 14870 / DSM 20603 / BCRC 15368 / CIP 55.134 / JCM 11481 / NBRC 15587 / NCTC 10816 / Prevot 55134) (Listeria denitrificans).